A 236-amino-acid chain; its full sequence is Phospholipid hydroperoxide glutathione peroxidase 1, chloroplastic (236 aa).

A compositionally biased stretch (low complexity) spans 1–16 (MVSMTTSSSSYGTFST). Residues 1 to 24 (MVSMTTSSSSYGTFSTVVNSSRPN) are disordered. A chloroplast-targeting transit peptide spans 1-64 (MVSMTTSSSS…PINPGFLFKS (64 aa)). Residue Cys111 is part of the active site.

This sequence belongs to the glutathione peroxidase family. In terms of tissue distribution, expressed in leaves, stems, flowers, green siliques and seeds.

The protein resides in the plastid. The protein localises to the chloroplast. The catalysed reaction is a hydroperoxy polyunsaturated fatty acid + 2 glutathione = a hydroxy polyunsaturated fatty acid + glutathione disulfide + H2O. In terms of biological role, protects cells and enzymes from oxidative damage, by catalyzing the reduction of hydrogen peroxide, lipid peroxides and organic hydroperoxide, by glutathione. In Arabidopsis thaliana (Mouse-ear cress), this protein is Phospholipid hydroperoxide glutathione peroxidase 1, chloroplastic (GPX1).